We begin with the raw amino-acid sequence, 303 residues long: Glycine--tRNA ligase alpha subunit (303 aa).

The protein belongs to the class-II aminoacyl-tRNA synthetase family. As to quaternary structure, tetramer of two alpha and two beta subunits.

It localises to the cytoplasm. The enzyme catalyses tRNA(Gly) + glycine + ATP = glycyl-tRNA(Gly) + AMP + diphosphate. This chain is Glycine--tRNA ligase alpha subunit (glyQ), found in Escherichia coli (strain K12).